Consider the following 501-residue polypeptide: Pre-mRNA-splicing factor 38B (501 aa).

Residues 1-11 (MAGSQQQQQQQ) show a composition bias toward low complexity. Disordered stretches follow at residues 1 to 28 (MAGS…LPLW) and 208 to 501 (DQHM…ADSP). Residues 243–273 (GDKRRSRTPRRSPSPRKSQNRSRSRSHHRER) are compositionally biased toward basic residues. Residues 281–302 (ELERERDRQRKEREGKDRDRDR) adopt a coiled-coil conformation. A compositionally biased stretch (basic and acidic residues) spans 281–328 (ELERERDRQRKEREGKDRDRDRDRDRERDRERDRDRRRSRTPDRNAER). The segment covering 329–341 (RRSRSRERRRSRS) has biased composition (basic residues). A compositionally biased stretch (basic and acidic residues) spans 342–408 (TSRDKRTERK…EEKKHREEKR (67 aa)). The span at 409–435 (SKRSRSRSRDRKHKAERSSKKRSRSGS) shows a compositional bias: basic residues. A compositionally biased stretch (basic and acidic residues) spans 437–447 (SRQEAGEEKNR). A compositionally biased stretch (basic residues) spans 448 to 468 (KRERSHSKDRQHKRSRSKERS). Positions 469 to 491 (HRRESSNERIHARQERPSSESGE) are enriched in basic and acidic residues. Positions 492-501 (RTNSVRADSP) are enriched in polar residues.

This sequence belongs to the PRP38 family.

It localises to the nucleus. May be required for pre-mRNA splicing. The polypeptide is Pre-mRNA-splicing factor 38B (prpf38b) (Danio rerio (Zebrafish)).